The chain runs to 360 residues: Protein RecA (360 aa).

Residue 66 to 73 (GPESSGKT) coordinates ATP. Residues 330–360 (DAKAIEERENPEKVKQDKEVPVNKDASDEKK) form a disordered region.

This sequence belongs to the RecA family.

The protein localises to the cytoplasm. Can catalyze the hydrolysis of ATP in the presence of single-stranded DNA, the ATP-dependent uptake of single-stranded DNA by duplex DNA, and the ATP-dependent hybridization of homologous single-stranded DNAs. It interacts with LexA causing its activation and leading to its autocatalytic cleavage. This chain is Protein RecA, found in Lactobacillus johnsonii (strain CNCM I-12250 / La1 / NCC 533).